Consider the following 161-residue polypeptide: Allophycocyanin beta chain (161 aa).

Asn71 bears the N4-methylasparagine mark. Cys81 provides a ligand contact to (2R,3E)-phycocyanobilin.

This sequence belongs to the phycobiliprotein family. In terms of assembly, heterodimer of an alpha and a beta chain. Contains one covalently linked phycocyanobilin chromophore.

Its subcellular location is the cellular thylakoid membrane. Its function is as follows. Light-harvesting photosynthetic bile pigment-protein from the phycobiliprotein complex. Allophycocyanin has a maximum absorption at approximately 650 nanometers. The sequence is that of Allophycocyanin beta chain (apcB) from Synechocystis sp. (strain PCC 6714) (Aphanocapsa sp. (strain PCC 6714)).